Here is a 522-residue protein sequence, read N- to C-terminus: Sterol O-acyltransferase 2 (522 aa).

Disordered stretches follow at residues M1 to P36 and S74 to P96. The Cytoplasmic segment spans residues M1–F120. Positions G17 to P36 are enriched in basic and acidic residues. H119 is a binding site for cholesterol. A helical membrane pass occupies residues R121 to D142. Over F143–Q162 the chain is Lumenal. Residues L163–W188 traverse the membrane as a helical segment. The Cytoplasmic segment spans residues A189 to A196. The helical transmembrane segment at T197–V220 threads the bilayer. Over E221–S228 the chain is Lumenal. A helical membrane pass occupies residues R229–P252. Over G253–R293 the chain is Cytoplasmic. Position 277 is a cysteine sulfenic acid (-SOH); alternate (C277). Residue C277 forms a Glycyl cysteine thioester (Cys-Gly) (interchain with G-Cter in ubiquitin); alternate linkage. Residues W294–M326 traverse the membrane as a helical segment. Residues S327 to A343 lie on the Lumenal side of the membrane. The chain crosses the membrane as a helical span at residues T344–M369. At L370–R417 the chain is on the cytoplasmic side. Positions F377–N383 match the FYXDWWN motif motif. 6 residues coordinate an acyl-CoA: N389, R392, N395, H399, Y407, and S430. Residues A418–L442 form a helical membrane-spanning segment. Residue H434 is part of the active site. The Lumenal portion of the chain corresponds to G443–V448. Residues M449–M464 traverse the membrane as a helical segment. Residues H465 to G470 are Cytoplasmic-facing. The chain crosses the membrane as a helical span at residues P471–C502. The Lumenal portion of the chain corresponds to P503 to T522.

It belongs to the membrane-bound acyltransferase family. Sterol o-acyltransferase subfamily. In terms of assembly, may form homo- or heterodimers. Interacts with INSIG1; the interaction is direct and promotes association with AMFR/gp78. In terms of processing, polyubiquitinated by AMFR/gp78 at Cys-277, leading to its degradation when the lipid levels are low. Association with AMFR/gp78 is mediated via interaction with INSIG1. High concentration of cholesterol and fatty acid results in Cys-277 oxidation, preventing ubiquitination at the same site, resulting in protein stabilization. Oxidized at Cys-277: high concentration of cholesterol and fatty acid induce reactive oxygen species, which oxidizes Cys-277, preventing ubiquitination at the same site, and resulting in protein stabilization. In terms of tissue distribution, expression seems confined in hepatocytes and enterocytes.

The protein resides in the endoplasmic reticulum membrane. The catalysed reaction is a sterol + a long-chain fatty acyl-CoA = a long-chain 3-hydroxysterol ester + CoA. It carries out the reaction cholesterol + an acyl-CoA = a cholesterol ester + CoA. The enzyme catalyses cholesterol + (9Z)-octadecenoyl-CoA = cholesteryl (9Z-octadecenoate) + CoA. It catalyses the reaction (5Z,8Z,11Z,14Z,17Z)-eicosapentaenoyl-CoA + cholesterol = (5Z,8Z,11Z,14Z,17Z-eicosapentaenoyl)-cholesterol + CoA. The catalysed reaction is (9Z,12Z,15Z)-octadecatrienoyl-CoA + cholesterol = (9Z,12Z,15Z-octadecatrienoyl)-cholesterol + CoA. It carries out the reaction (5Z,8Z,11Z,14Z)-eicosatetraenoyl-CoA + cholesterol = cholesteryl (5Z,8Z,11Z,14Z)-eicosatetraenoate + CoA. Catalyzes the formation of fatty acid-cholesterol esters, which are less soluble in membranes than cholesterol. Plays a role in lipoprotein assembly and dietary cholesterol absorption. Utilizes oleoyl-CoA ((9Z)-octadecenoyl-CoA) and linolenoyl-CoA ((9Z,12Z,15Z)-octadecatrienoyl-CoA) as substrates. May provide cholesteryl esters for lipoprotein secretion from hepatocytes and intestinal mucosa. Functionally, has lower enzymatic activity compared to isoform 1. This chain is Sterol O-acyltransferase 2, found in Homo sapiens (Human).